The chain runs to 38 residues: Defensin-1 (38 aa).

3 disulfide bridges follow: C4/C25, C11/C33, and C15/C35.

The protein resides in the secreted. In terms of biological role, has antibacterial activity against the Gram-positive bacteria L.lactis and S.aureus, and against the Gram-negative bacteria E.coli D32 and V.parahemolyticus. The polypeptide is Defensin-1 (Crassostrea virginica (Eastern oyster)).